The chain runs to 1081 residues: Histone demethylase-like protein A (1081 aa).

Residues 37 to 173 (QHLQHPSLPN…LSGNTDYARY (137 aa)) form a disordered region. Low complexity predominate over residues 66 to 81 (SPSCNESNESNGETSS). Positions 119–132 (DTSNILSGSATSVS) are enriched in polar residues. Residues 141–161 (NSTPPSTVNNVPSSSSITSDS) show a composition bias toward low complexity. An SWIRM domain is found at 192–287 (CVTAAYACRL…FGCVEIPPAL (96 aa)). Positions 902–940 (ATAQKKKEPPCSNGFSAPVSTSAHPTDASAPARSNNSFS) are disordered. Positions 914–925 (NGFSAPVSTSAH) are enriched in polar residues. A DNA-binding region (HMG box) is located at residues 969–1049 (ARTGLNPFLL…TNTEIWDRWK (81 aa)).

It belongs to the flavin monoamine oxidase family.

The protein localises to the nucleus. Its function is as follows. H3K4 demethylase-like protein. Might not act as a H3K4 demethylase or is not the major H3K4 demethylase since its deletion does not affect whole genome H3K4 methylation. The sequence is that of Histone demethylase-like protein A from Aspergillus fumigatus (strain ATCC MYA-4609 / CBS 101355 / FGSC A1100 / Af293) (Neosartorya fumigata).